A 380-amino-acid polypeptide reads, in one-letter code: Alcohol dehydrogenase (380 aa).

Positions 48, 50, 70, 100, 103, 106, 114, and 178 each coordinate Zn(2+). Thr50 and His70 together coordinate an alcohol. Residue Thr50 coordinates NAD(+). Residues 203-208, Asp227, Arg232, Thr273, Val296, 296-298, Phe323, and Arg373 each bind NAD(+); these read GLGAVG and VGV.

It belongs to the zinc-containing alcohol dehydrogenase family. As to quaternary structure, homodimer. Zn(2+) serves as cofactor.

It is found in the cytoplasm. The catalysed reaction is a primary alcohol + NAD(+) = an aldehyde + NADH + H(+). It carries out the reaction a secondary alcohol + NAD(+) = a ketone + NADH + H(+). The sequence is that of Alcohol dehydrogenase (ADH) from Malus domestica (Apple).